We begin with the raw amino-acid sequence, 210 residues long: Syntaxin-binding protein 6 (210 aa).

An N-acetylserine modification is found at Ser-2. Residues 151-210 form the v-SNARE coiled-coil homology domain; it reads GNSILHSAADSVTSAVQKASQALNERGERLGRAEEKTEDLKNSAQQFAETAHKLAMKHKC.

As to quaternary structure, part of a ternary complex containing SNAP25 and STX1A that can be dissociated by NAPA and NSF. Interacts with STX4A. As to expression, detected at low levels in brain, and at very low levels in heart, adrenal gland, testis, liver and kidney.

It is found in the cytoplasm. It localises to the membrane. In terms of biological role, forms non-fusogenic complexes with SNAP25 and STX1A and may thereby modulate the formation of functional SNARE complexes and exocytosis. This is Syntaxin-binding protein 6 (STXBP6) from Homo sapiens (Human).